We begin with the raw amino-acid sequence, 914 residues long: Neuropilin-1 (914 aa).

Positions 1 to 18 (MDWGLFLHCAALTFTLSR) are cleaved as a signal peptide. Topologically, residues 20-847 (LRSDKCGDTI…PGNVLKTLDP (828 aa)) are extracellular. Intrachain disulfides connect cysteine 25–cysteine 52, cysteine 80–cysteine 102, and cysteine 145–cysteine 171. CUB domains follow at residues 25–139 (CGDT…YEVF) and 145–263 (CSRN…YSVS). A glycan (N-linked (GlcNAc...) asparagine) is linked at asparagine 148. Glutamate 193, aspartate 207, and aspartate 248 together coordinate Ca(2+). Cysteine 204 and cysteine 226 are disulfide-bonded. A glycan (N-linked (GlcNAc...) asparagine) is linked at asparagine 259. Cystine bridges form between cysteine 273-cysteine 422 and cysteine 429-cysteine 581. F5/8 type C domains lie at 273–422 (CMEP…VYGC) and 429–581 (CSGM…LLGC). N-linked (GlcNAc...) asparagine glycosylation occurs at asparagine 520. Residue serine 610 is glycosylated (O-linked (Xyl...) (chondroitin sulfate) serine; alternate). An O-linked (Xyl...) (heparan sulfate) serine; alternate glycan is attached at serine 610. The region spanning 636-801 (PYNLNCGFGW…NHISQEDCQK (166 aa)) is the MAM domain. The segment at 809–829 (IVEEDPESNQTGFTPSYRTDE) is disordered. Residues 816 to 825 (SNQTGFTPSY) show a composition bias toward polar residues. Asparagine 817 carries an N-linked (GlcNAc...) asparagine glycan. Residues 848–870 (ILITIIAMSALGVLLGAICGVVL) traverse the membrane as a helical segment. The Cytoplasmic portion of the chain corresponds to 871-914 (YCACWHNGMSERNLSALENYNFELVDGVKLKKDKLNTQNSYSEA).

This sequence belongs to the neuropilin family. As to quaternary structure, homodimer, and heterodimer. Developing nervous system; optic tectum (layers D and E of SGFS), amacrine cells of retina, neurites of dorsal root ganglia. Also expressed in non-neuronal cells, e.g. blood vessels in the entire embryo.

The protein resides in the mitochondrion membrane. It localises to the cell membrane. Functionally, receptor involved in the development of the cardiovascular system, in angiogenesis, in the formation of certain neuronal circuits and in organogenesis outside the nervous system. Mediates the chemorepulsant activity of semaphorins. Binding to VEGFA initiates a signaling pathway needed for motor neuron axon guidance and cell body migration, including for the caudal migration of facial motor neurons from rhombomere 4 to rhombomere 6 during embryonic development. Regulates mitochondrial iron transport via interaction. In Gallus gallus (Chicken), this protein is Neuropilin-1 (NRP1).